Consider the following 273-residue polypeptide: 4-hydroxy-tetrahydrodipicolinate reductase (273 aa).

Residues 12-17 (GAGGRM) and E38 each bind NAD(+). R39 contacts NADP(+). Residues 102–104 (GTT) and 126–129 (AANF) each bind NAD(+). H159 (proton donor/acceptor) is an active-site residue. H160 provides a ligand contact to (S)-2,3,4,5-tetrahydrodipicolinate. The active-site Proton donor is K163. 169–170 (GT) is a (S)-2,3,4,5-tetrahydrodipicolinate binding site.

Belongs to the DapB family. In terms of assembly, homotetramer.

Its subcellular location is the cytoplasm. It catalyses the reaction (S)-2,3,4,5-tetrahydrodipicolinate + NAD(+) + H2O = (2S,4S)-4-hydroxy-2,3,4,5-tetrahydrodipicolinate + NADH + H(+). The catalysed reaction is (S)-2,3,4,5-tetrahydrodipicolinate + NADP(+) + H2O = (2S,4S)-4-hydroxy-2,3,4,5-tetrahydrodipicolinate + NADPH + H(+). Its pathway is amino-acid biosynthesis; L-lysine biosynthesis via DAP pathway; (S)-tetrahydrodipicolinate from L-aspartate: step 4/4. Catalyzes the conversion of 4-hydroxy-tetrahydrodipicolinate (HTPA) to tetrahydrodipicolinate. The protein is 4-hydroxy-tetrahydrodipicolinate reductase of Klebsiella pneumoniae (strain 342).